We begin with the raw amino-acid sequence, 202 residues long: Recombination protein RecR (202 aa).

The C4-type zinc-finger motif lies at cysteine 59–cysteine 74. The Toprim domain occupies histidine 82–proline 176.

Belongs to the RecR family.

In terms of biological role, may play a role in DNA repair. It seems to be involved in an RecBC-independent recombinational process of DNA repair. It may act with RecF and RecO. The protein is Recombination protein RecR of Thermosynechococcus vestitus (strain NIES-2133 / IAM M-273 / BP-1).